Reading from the N-terminus, the 5289-residue chain is Mucin-2 (5289 aa).

An N-terminal signal peptide occupies residues 1–20 (MGLPLARLAAVCLALSLAGG). Serine 21 is subject to Phosphoserine. Histidine 34 is a binding site for Cu(2+). The 173-residue stretch at 35 to 207 (NVCSTWGNFH…KINQPDVVCE (173 aa)) folds into the VWFD 1 domain. Intrachain disulfides connect cysteine 37–cysteine 169, cysteine 59–cysteine 206, cysteine 67–cysteine 166, cysteine 218–cysteine 255, cysteine 225–cysteine 250, cysteine 237–cysteine 275, cysteine 257–cysteine 263, cysteine 265–cysteine 291, cysteine 295–cysteine 329, cysteine 308–cysteine 321, cysteine 312–cysteine 351, cysteine 331–cysteine 345, cysteine 353–cysteine 375, cysteine 370–cysteine 387, cysteine 373–cysteine 382, cysteine 391–cysteine 528, cysteine 413–cysteine 563, cysteine 435–cysteine 443, cysteine 574–cysteine 619, cysteine 588–cysteine 614, cysteine 601–cysteine 639, cysteine 621–cysteine 627, cysteine 629–cysteine 654, cysteine 661–cysteine 698, cysteine 674–cysteine 688, cysteine 678–cysteine 718, cysteine 700–cysteine 712, cysteine 720–cysteine 742, and cysteine 740–cysteine 749. Aspartate 49 contacts Ca(2+). Cu(+)-binding residues include methionine 146 and methionine 154. Glutamate 156 serves as a coordination point for Cu(2+). The N-linked (GlcNAc...) asparagine glycan is linked to asparagine 163. Residues aspartate 171, asparagine 173, leucine 175, and glutamate 180 each contribute to the Ca(2+) site. Cu(2+) is bound at residue histidine 277. In terms of domain architecture, TIL spans 295 to 351 (CPGNLVYLESGSPCMDTCSHLEVSSLCEEHRMDGCFCPEGTVYDDIGDSGCVPVSQC). Histidine 324 serves as a coordination point for Cu(2+). Cu(+) is bound at residue methionine 326. Residues 389–564 (GTCALEGGSH…NTWKAQSSCH (176 aa)) enclose the VWFD 2 domain. Residue aspartate 403 participates in Ca(2+) binding. Asparagine 423 carries N-linked (GlcNAc...) asparagine glycosylation. 5 residues coordinate Ca(2+): asparagine 530, asparagine 532, leucine 534, aspartate 537, and aspartate 538. N-linked (GlcNAc...) asparagine glycosylation is present at asparagine 670. Asparagine 770 is a glycosylation site (N-linked (GlcNAc...) asparagine). Disulfide bonds link cysteine 784–cysteine 820, cysteine 802–cysteine 814, cysteine 822–cysteine 844, cysteine 839–cysteine 856, cysteine 842–cysteine 851, cysteine 860–cysteine 992, cysteine 882–cysteine 1027, cysteine 891–cysteine 989, cysteine 909–cysteine 916, cysteine 1037–cysteine 1080, cysteine 1051–cysteine 1075, cysteine 1062–cysteine 1102, cysteine 1082–cysteine 1090, cysteine 1092–cysteine 1117, cysteine 1108–cysteine 1137, cysteine 1121–cysteine 1163, cysteine 1145–cysteine 1187, cysteine 1167–cysteine 1181, cysteine 1189–cysteine 1213, cysteine 1208–cysteine 1238, and cysteine 1211–cysteine 1221. One can recognise a VWFD 3 domain in the interval 858–1028 (GTCSIYGSGH…NSWKEAPTCP (171 aa)). Residue aspartate 872 participates in Ca(2+) binding. Residue asparagine 894 is glycosylated (N-linked (GlcNAc...) asparagine). Ca(2+) contacts are provided by asparagine 994, aspartate 996, arginine 998, asparagine 1001, and aspartate 1002. N-linked (GlcNAc...) asparagine glycans are attached at residues asparagine 1139 and asparagine 1154. 3 N-linked (GlcNAc...) asparagine glycosylation sites follow: asparagine 1215, asparagine 1230, and asparagine 1246. 10 O-linked (GalNAc) threonine glycosylation sites follow: threonine 1266, threonine 1267, threonine 1269, threonine 1270, threonine 1272, threonine 1275, threonine 1276, threonine 1281, threonine 1282, and threonine 1287. O-linked (GalNAc) serine glycans are attached at residues serine 1291 and serine 1292. Threonine 1293 carries O-linked (GalNAc) threonine glycosylation. An O-linked (GalNAc) serine glycan is attached at serine 1296. The O-linked (GalNAc) threonine glycan is linked to threonine 1297. Ca(2+) is bound by residues asparagine 1310, aspartate 1312, histidine 1313, serine 1316, aspartate 1319, glycine 1321, aspartate 1322, glutamate 1324, aspartate 1381, and tyrosine 1382. Pro residues-rich tracts occupy residues 1399-1411 (PSPPTTTPSPPPT), 1419-1510 (TTTP…PITP), 1520-1549 (TTTPSPPTTTTTTPPPTTTPSPPTTTPITP), 1559-1628 (TTTP…PITP), and 1638-1679 (TTTP…PPTT). The segment at 1399–1773 (PSPPTTTPSP…SITPPTFSPF (375 aa)) is disordered. Repeat copies occupy residues 1401–1416 (PPTTTPSPPPTSTTTL), 1417–1432 (PPTTTPSPPTTTTTTP), 1433–1448 (PPTTTPSPPITTTTTP), 1449–1464 (PPTTTPSPPISTTTTP), 1465–1471 (PPTTTPS), and 1472–1478 (PPTTTPS). Positions 1401-1747 (PPTTTPSPPP…SPPTTTMTTL (347 aa)) are approximate repeats. Residues 1479–1494 (PPTTTPSPPTTTTTTP) form a 7A repeat. Residues 1495–1517 (PPTTTPSPPTTTPITPPASTTTL) form a 7B repeat. An 8A repeat occupies 1518–1533 (PPTTTPSPPTTTTTTP). An 8B repeat occupies 1534 to 1556 (PPTTTPSPPTTTPITPPTSTTTL). A 9A repeat occupies 1557–1572 (PPTTTPSPPPTTTTTP). A 9B repeat occupies 1573 to 1596 (PPTTTPSPPTTTTPSPPTITTTTP). The 10A repeat unit spans residues 1597-1612 (PPTTTPSPPTTTTTTP). A 10B repeat occupies 1613 to 1635 (PPTTTPSPPTTTPITPPTSTTTL). Residues 1636–1651 (PPTTTPSPPPTTTTTP) form an 11A repeat. The stretch at 1652–1675 (PPTTTPSPPTTTTPSPPITTTTTP) is one 11B repeat. Repeat copies occupy residues 1676–1683 (PPTTTPSS), 1684–1699 (PITTTPSPPTTTMTTP), 1700–1715 (SPTTTPSSPITTTTTP), 1716–1731 (SSTTTPSPPPTTMTTP), and 1732–1747 (SPTTTPSPPTTTMTTL). 2 stretches are compositionally biased toward low complexity: residues 1680–1720 (TPSS…STTT) and 1741–1759 (TTTMTTLPPTTTSSPLTTT). The span at 1760–1770 (PLPPSITPPTF) shows a compositional bias: pro residues. Residues asparagine 1787 and asparagine 1820 are each glycosylated (N-linked (GlcNAc...) asparagine). 4 stretches are compositionally biased toward low complexity: residues 1885-2158 (MTTT…TMVT), 2165-4238 (GTQT…QTPT), 4269-4315 (TTVT…STAP), and 4329-4430 (STPQ…PSII). Disordered stretches follow at residues 1885–4238 (MTTT…QTPT) and 4269–4430 (TTVT…PSII). N-linked (GlcNAc...) asparagine glycosylation is found at asparagine 4449, asparagine 4461, asparagine 4472, and asparagine 4483. The segment at 4492 to 4524 (PTPTPSKSTPTPSKPSSTPSKPTPGTKPPECPD) is disordered. The span at 4496–4511 (PSKSTPTPSKPSSTPS) shows a compositional bias: low complexity. Over residues 4512–4522 (KPTPGTKPPEC) the composition is skewed to pro residues. Asparagine 4532, asparagine 4548, and asparagine 4612 each carry an N-linked (GlcNAc...) asparagine glycan. The region spanning 4589–4772 (CYCTGWGDPH…VNDPSKPHCP (184 aa)) is the VWFD 4 domain. 3 disulfide bridges follow: cysteine 4591-cysteine 4732, cysteine 4613-cysteine 4771, and cysteine 4637-cysteine 4645. N-linked (GlcNAc...) asparagine glycans are attached at residues asparagine 4726 and asparagine 4737. A disordered region spans residues 4770–4795 (HCPHSSSTTKRPAVTVPGGGKTTPHK). N-linked (GlcNAc...) asparagine glycosylation is found at asparagine 4862, asparagine 4897, asparagine 4991, asparagine 4998, asparagine 5065, asparagine 5080, asparagine 5129, asparagine 5148, and asparagine 5179. Positions 4927 to 4996 (CVGPDNVPRE…DTCCNITVCK (70 aa)) constitute a VWFC 1 domain. The VWFC 2 domain occupies 5034–5101 (GVCVHGNAEY…APGECCKKCE (68 aa)). 4 disulfides stabilise this stretch: cysteine 5185/cysteine 5232, cysteine 5199/cysteine 5246, cysteine 5208/cysteine 5262, and cysteine 5212/cysteine 5264. The CTCK domain occupies 5185 to 5270 (CSTVPVTTEV…SCQCQDTVCG (86 aa)).

In terms of assembly, homomultimer; disulfide-linked. The N- and C-terminus mediate their assembly into higher order structures to form filaments. The CTCK domains of two polypeptides associate in the endoplasmic reticulum to generate intermolecularly disulfide-bonded dimers. These dimers progress to the Golgi apparatus, which is a more acidic environment than the endoplasmic reticulum. Under acidic conditions, the N-termini form non-covalent intermolecular interactions that juxtapose assemblies of the third VWD domain (VWD3) from different CTCK-linked dimers. The VWD3 assemblies then become disulfide bonded to one another to produce long, disulfide-linked polymers that remain highly compact until secretion. Interacts with FCGBP. Interacts with AGR2; disulfide-linked. (Microbial infection) Interacts in vitro with L.monocytogenes internalin proteins InlB, InlC and InlJ; for InlC binding is slightly better at pH 5.5, (the pH of the intestine) than at pH 7.4. Post-translationally, O-glycosylated. O-glycosylation is required for mucin assembly. Goblet cells synthesize two forms of mucin that differ in branched chain O-glycosylation and the site of production in the colon. May undergo proteolytic cleavage in the outer mucus layer of the colon, contributing to the expanded volume and loose nature of this layer which allows for bacterial colonization in contrast to the inner mucus layer which is dense and devoid of bacteria. In terms of processing, at low pH of 6 and under, undergoes autocatalytic cleavage in vitro in the N-terminal region of the fourth VWD domain. It is likely that this also occurs in vivo and is triggered by the low pH of the late secretory pathway. As to expression, colon, small intestine, colonic tumors, bronchus, cervix and gall bladder.

The protein resides in the secreted. In terms of biological role, coats the epithelia of the intestines and other mucus membrane-containing organs to provide a protective, lubricating barrier against particles and infectious agents at mucosal surfaces. Major constituent of the colon mucus, which is mainly formed by large polymeric networks of MUC2 secreted by goblet cells that cover the exposed surfaces of intestine. MUC2 networks form hydrogels that guard the underlying epithelium from pathogens and other hazardous matter entering from the outside world, while permitting nutrient absorption and gas exchange. Acts as a divalent copper chaperone that protects intestinal cells from copper toxicity and facilitates nutritional copper unptake into cells. Binds both Cu(2+) and its reduced form, Cu(1+), at two juxtaposed binding sites: Cu(2+), once reduced to Cu(1+) by vitamin C (ascorbate) or other dietary antioxidants, transits to the other binding site. MUC2-bound Cu(1+) is protected from oxidation in aerobic environments, and can be released for nutritional delivery to cells. Mucin gels store antimicrobial molecules that participate in innate immunity. Mucin glycoproteins also house and feed the microbiome, lubricate tissue surfaces, and may facilitate the removal of contaminants and waste products from the body. Goblet cells synthesize two forms of MUC2 mucin that differ in branched chain O-glycosylation and the site of production in the colon: a (1) 'thick' mucus that wraps the microbiota to form fecal pellets is produced in the proximal, ascending colon. 'Thick' mucus transits along the descending colon and is lubricated by a (2) 'thin' MUC2 mucus produced in the distal colon which adheres to the 'thick' mucus. The sequence is that of Mucin-2 from Homo sapiens (Human).